A 363-amino-acid polypeptide reads, in one-letter code: DNA repair protein rlp1 (363 aa).

This sequence belongs to the RecA family. RAD51 subfamily. In terms of assembly, interacts with rdl1 and sws1.

The protein resides in the cytoplasm. It is found in the nucleus. In terms of biological role, required for normal levels of meiotic recombination. Acts in the recombinational pathway of double-strand break (DSB) repair together with rhp51, rhp55 and rad22. Required for the full extent of DNA recombination and cell survival under condition of a replication fork collapse. This Schizosaccharomyces pombe (strain 972 / ATCC 24843) (Fission yeast) protein is DNA repair protein rlp1.